The chain runs to 297 residues: Acetyl-coenzyme A carboxylase carboxyl transferase subunit beta (297 aa).

Positions 27–296 (LWHKCPSCEA…PEEAREAAAV (270 aa)) constitute a CoA carboxyltransferase N-terminal domain. Residues Cys31, Cys34, Cys50, and Cys53 each coordinate Zn(2+). The segment at 31-53 (CPSCEAVLYRPELEKTLDVCPKC) adopts a C4-type zinc-finger fold.

This sequence belongs to the AccD/PCCB family. As to quaternary structure, acetyl-CoA carboxylase is a heterohexamer composed of biotin carboxyl carrier protein (AccB), biotin carboxylase (AccC) and two subunits each of ACCase subunit alpha (AccA) and ACCase subunit beta (AccD). Requires Zn(2+) as cofactor.

It is found in the cytoplasm. The enzyme catalyses N(6)-carboxybiotinyl-L-lysyl-[protein] + acetyl-CoA = N(6)-biotinyl-L-lysyl-[protein] + malonyl-CoA. It functions in the pathway lipid metabolism; malonyl-CoA biosynthesis; malonyl-CoA from acetyl-CoA: step 1/1. Component of the acetyl coenzyme A carboxylase (ACC) complex. Biotin carboxylase (BC) catalyzes the carboxylation of biotin on its carrier protein (BCCP) and then the CO(2) group is transferred by the transcarboxylase to acetyl-CoA to form malonyl-CoA. In Pseudomonas putida (strain ATCC 700007 / DSM 6899 / JCM 31910 / BCRC 17059 / LMG 24140 / F1), this protein is Acetyl-coenzyme A carboxylase carboxyl transferase subunit beta.